We begin with the raw amino-acid sequence, 75 residues long: Transcription attenuation protein MtrB (75 aa).

It belongs to the MtrB family. Oligomer of 11 identical subunits arranged in doughnut-like structure.

In terms of biological role, required for transcription attenuation control in the Trp operon. This trans-acting factor seems to recognize a 10 bases nucleotide sequence in the Trp leader transcript causing transcription termination. Binds the leader RNA only in presence of L-tryptophan. This chain is Transcription attenuation protein MtrB, found in Bacillus velezensis (strain DSM 23117 / BGSC 10A6 / LMG 26770 / FZB42) (Bacillus amyloliquefaciens subsp. plantarum).